A 484-amino-acid polypeptide reads, in one-letter code: Protein nucleotidyltransferase YdiU (484 aa).

Positions 92, 94, 95, 115, 127, 128, 178, and 185 each coordinate ATP. D258 (proton acceptor) is an active-site residue. The Mg(2+) site is built by N259 and D268. Residue D268 coordinates ATP.

It belongs to the SELO family. Mg(2+) is required as a cofactor. The cofactor is Mn(2+).

The catalysed reaction is L-seryl-[protein] + ATP = 3-O-(5'-adenylyl)-L-seryl-[protein] + diphosphate. The enzyme catalyses L-threonyl-[protein] + ATP = 3-O-(5'-adenylyl)-L-threonyl-[protein] + diphosphate. It catalyses the reaction L-tyrosyl-[protein] + ATP = O-(5'-adenylyl)-L-tyrosyl-[protein] + diphosphate. It carries out the reaction L-histidyl-[protein] + UTP = N(tele)-(5'-uridylyl)-L-histidyl-[protein] + diphosphate. The catalysed reaction is L-seryl-[protein] + UTP = O-(5'-uridylyl)-L-seryl-[protein] + diphosphate. The enzyme catalyses L-tyrosyl-[protein] + UTP = O-(5'-uridylyl)-L-tyrosyl-[protein] + diphosphate. In terms of biological role, nucleotidyltransferase involved in the post-translational modification of proteins. It can catalyze the addition of adenosine monophosphate (AMP) or uridine monophosphate (UMP) to a protein, resulting in modifications known as AMPylation and UMPylation. This is Protein nucleotidyltransferase YdiU from Mycolicibacterium smegmatis (strain ATCC 700084 / mc(2)155) (Mycobacterium smegmatis).